The primary structure comprises 468 residues: N-acetyltransferase SLI1 (468 aa).

It localises to the endoplasmic reticulum. In terms of biological role, confers resistance to the sphingolipid biosynthesis inhibitor drug myriocin (ISP-1). Inactivates ISP-1 by converting it into N-acetyl-myriocin. Cooperates with YPK1 in mediating resistance to myriocin. In Saccharomyces cerevisiae (strain ATCC 204508 / S288c) (Baker's yeast), this protein is N-acetyltransferase SLI1 (SLI1).